A 96-amino-acid chain; its full sequence is Large ribosomal subunit protein bL28 (96 aa).

The disordered stretch occupies residues 1–23 (MSRVCELSGKAPMTGNTVSHANN).

It belongs to the bacterial ribosomal protein bL28 family.

In Cereibacter sphaeroides (strain ATCC 17029 / ATH 2.4.9) (Rhodobacter sphaeroides), this protein is Large ribosomal subunit protein bL28.